The chain runs to 194 residues: Probable transcription factor At4g00130 (194 aa).

It belongs to the GeBP family.

This is Probable transcription factor At4g00130 from Arabidopsis thaliana (Mouse-ear cress).